A 225-amino-acid chain; its full sequence is Membrane protein (225 aa).

The Virion surface portion of the chain corresponds to 1-20 (MDNTTNCTLGTEQAVQLFKE). A helical transmembrane segment spans residues 21–41 (YNLFVTAFLLFLTILLQYGYA). Residues 42 to 51 (TRNKVIYILK) are Intravirion-facing. Residues 52 to 72 (MIVLWCFWPLNIAVGAISCIY) form a helical membrane-spanning segment. Topologically, residues 73–77 (PPNTG) are virion surface. The helical transmembrane segment at 78–98 (GLVAAIILTVFACLSFIGYWI) threads the bilayer. Residues 99 to 225 (QSFRLFKRCR…VATGGSSLYT (127 aa)) lie on the Intravirion side of the membrane.

The protein belongs to the gammacoronaviruses M protein family. In terms of assembly, homomultimer. Interacts with envelope E protein in the budding compartment of the host cell, which is located between endoplasmic reticulum and the Golgi complex. Forms a complex with HE and S proteins. Interacts with nucleocapsid N protein. This interaction probably participates in RNA packaging into the virus.

The protein resides in the virion membrane. It localises to the host Golgi apparatus membrane. Component of the viral envelope that plays a central role in virus morphogenesis and assembly via its interactions with other viral proteins. The protein is Membrane protein of Avian infectious bronchitis virus (strain 6/82) (IBV).